A 412-amino-acid chain; its full sequence is AA9 family lytic polysaccharide monooxygenase A (412 aa).

An N-terminal signal peptide occupies residues 1–20 (MKTTTYSLLALAAASKLASA). Cu(2+) contacts are provided by His21 and His103. The cysteines at positions 63 and 186 are disulfide-linked. Asn151 carries N-linked (GlcNAc...) asparagine glycosylation. His172 is an O2 binding site. Tyr183 contacts Cu(2+). Asn334 and Asn385 each carry an N-linked (GlcNAc...) asparagine glycan. The CBM1 domain maps to 373–409 (GVAKMYERCGGINHTGPTTCESGSVCKKWNPYYYQCV).

This sequence belongs to the polysaccharide monooxygenase AA9 family. Cu(2+) is required as a cofactor.

It localises to the secreted. The enzyme catalyses [(1-&gt;4)-beta-D-glucosyl]n+m + reduced acceptor + O2 = 4-dehydro-beta-D-glucosyl-[(1-&gt;4)-beta-D-glucosyl]n-1 + [(1-&gt;4)-beta-D-glucosyl]m + acceptor + H2O.. Its function is as follows. Lytic polysaccharide monooxygenase (LPMO) that depolymerizes crystalline and amorphous polysaccharides via the oxidation of scissile alpha- or beta-(1-4)-glycosidic bonds, yielding C4 oxidation products. Catalysis by LPMOs requires the reduction of the active-site copper from Cu(II) to Cu(I) by a reducing agent and H(2)O(2) or O(2) as a cosubstrate. The protein is AA9 family lytic polysaccharide monooxygenase A (eglD) of Aspergillus niger (strain ATCC MYA-4892 / CBS 513.88 / FGSC A1513).